The following is a 380-amino-acid chain: Acyl-coenzyme A diphosphatase SCS3 (380 aa).

Residues 1–7 lie on the Cytoplasmic side of the membrane; that stretch reads MSSKWFN. A helical membrane pass occupies residues 8 to 28; the sequence is AIHLLVCPLTVLVGYLMNAYG. Residues 29 to 43 lie on the Lumenal side of the membrane; that stretch reads YGAALQATLNKDGLV. The helical transmembrane segment at 44–64 threads the bilayer; the sequence is NAMLVKKGWFWTSLVGWWCII. Residues 65 to 88 are Cytoplasmic-facing; that stretch reads RYRAVPGATGRDRRHIVQSFKRYA. Residues 89–109 form a helical membrane-spanning segment; that stretch reads ILTVWWYVFTQGIWFGVGPIM. Residues 110-233 are Lumenal-facing; the sequence is DLVFVYTGGH…GHWAGGHDPS (124 aa). Residues 234–254 traverse the membrane as a helical segment; that stretch reads GHVFLATLMCMFLLGELRVFG. Residue His-235 is part of the active site. Over 255 to 325 the chain is Cytoplasmic; it reads RRALAHLYAQ…LTRCIACDHP (71 aa). The helical transmembrane segment at 326–346 threads the bilayer; the sequence is VIILLTLLVTWLWQLLLTAVA. Residues 347–356 lie on the Lumenal side of the membrane; it reads SRFHTVREHM. The active site involves His-350. A helical membrane pass occupies residues 357–377; sequence SGLLAAYIVTGLVYARDAAAL. Residues 378–380 lie on the Cytoplasmic side of the membrane; it reads RPV.

The protein belongs to the FIT family. Fungal FIT2B/SCS3 subfamily.

It localises to the endoplasmic reticulum membrane. The enzyme catalyses an acyl-CoA + H2O = an acyl-4'-phosphopantetheine + adenosine 3',5'-bisphosphate + 2 H(+). It catalyses the reaction (9Z)-octadecenoyl-CoA + H2O = S-(9Z-octadecenoyl)-4'-phosphopantetheine + adenosine 3',5'-bisphosphate + 2 H(+). The catalysed reaction is (5Z,8Z,11Z,14Z)-eicosatetraenoyl-CoA + H2O = S-(5Z,8Z,11Z,14Z-eicosatetraenoyl)-4'-phosphopantetheine + adenosine 3',5'-bisphosphate + 2 H(+). It carries out the reaction hexadecanoyl-CoA + H2O = S-hexadecanoyl-4'-phosphopantetheine + adenosine 3',5'-bisphosphate + 2 H(+). In terms of biological role, fatty acyl-coenzyme A (CoA) diphosphatase that hydrolyzes fatty acyl-CoA to yield acyl-4'-phosphopantetheine and adenosine 3',5'-bisphosphate. Preferentially hydrolyzes unsaturated long-chain acyl-CoA substrates in the endoplasmic reticulum (ER) lumen. This catalytic activity is required for maintaining ER structure and for lipid droplets (LDs) biogenesis, which are lipid storage organelles involved in maintaining lipid and energy homeostasis. May directly bind to diacylglycerol (DAGs) and triacylglycerol, which is also important for LD biogenesis. May support directional budding of nacent LDs from the ER into the cytosol by reducing DAG levels at sites of LD formation. May play a role in the regulation of cell morphology and cytoskeletal organization. Involved in phospholipid biosynthesis. This Saccharomyces cerevisiae (strain ATCC 204508 / S288c) (Baker's yeast) protein is Acyl-coenzyme A diphosphatase SCS3.